Reading from the N-terminus, the 257-residue chain is Phosphatidylglycerol--prolipoprotein diacylglyceryl transferase (257 aa).

Transmembrane regions (helical) follow at residues 12 to 32 (FSIR…VYLA), 49 to 69 (FILM…VIFE), 83 to 103 (IWNG…LLVI), and 109 to 129 (LINP…AQAI). Arg-131 serves as a coordination point for a 1,2-diacyl-sn-glycero-3-phospho-(1'-sn-glycerol). The next 3 membrane-spanning stretches (helical) occupy residues 167-187 (VPTF…IMSI), 197-217 (GEVA…IEGM), and 226-246 (GLRV…VMII).

This sequence belongs to the Lgt family.

It is found in the cell membrane. The enzyme catalyses L-cysteinyl-[prolipoprotein] + a 1,2-diacyl-sn-glycero-3-phospho-(1'-sn-glycerol) = an S-1,2-diacyl-sn-glyceryl-L-cysteinyl-[prolipoprotein] + sn-glycerol 1-phosphate + H(+). The protein operates within protein modification; lipoprotein biosynthesis (diacylglyceryl transfer). In terms of biological role, catalyzes the transfer of the diacylglyceryl group from phosphatidylglycerol to the sulfhydryl group of the N-terminal cysteine of a prolipoprotein, the first step in the formation of mature lipoproteins. This Streptococcus agalactiae serotype Ia (strain ATCC 27591 / A909 / CDC SS700) protein is Phosphatidylglycerol--prolipoprotein diacylglyceryl transferase.